The following is an 88-amino-acid chain: LYR motif-containing protein 2 (88 aa).

The N-terminal 19 residues, 1–19 (MAASRLPPATLTLKQFVRR), are a transit peptide targeting the mitochondrion.

This sequence belongs to the complex I LYR family.

The protein localises to the mitochondrion. Functionally, involved in efficient integration of the N-module into mitochondrial respiratory chain complex I. The polypeptide is LYR motif-containing protein 2 (LYRM2) (Homo sapiens (Human)).